The chain runs to 122 residues: Large ribosomal subunit protein uL14 (122 aa).

The protein belongs to the universal ribosomal protein uL14 family. In terms of assembly, part of the 50S ribosomal subunit. Forms a cluster with proteins L3 and L19. In the 70S ribosome, L14 and L19 interact and together make contacts with the 16S rRNA in bridges B5 and B8.

In terms of biological role, binds to 23S rRNA. Forms part of two intersubunit bridges in the 70S ribosome. The chain is Large ribosomal subunit protein uL14 from Rhizobium johnstonii (strain DSM 114642 / LMG 32736 / 3841) (Rhizobium leguminosarum bv. viciae).